The primary structure comprises 834 residues: Copper-exporting P-type ATPase (834 aa).

2 HMA domains span residues 3-64 (QTID…YDAS) and 99-162 (DSQQ…YGAE). Positions 14, 17, 110, and 113 each coordinate Cu(+). 6 helical membrane-spanning segments follow: residues 187-207 (WQAI…MIGD), 218-238 (LWLV…GHFY), 254-274 (TLVA…NLWP), 284-304 (LYYE…MLEA), 438-458 (AVFV…WYFF), and 464-484 (IVYT…CALG). The active-site 4-aspartylphosphate intermediate is Asp-523. Mg(2+) is bound by residues Asp-720 and Asp-724. Helical transmembrane passes span 779-799 (LGAF…LWPF) and 801-821 (GTLL…ITVV).

This sequence belongs to the cation transport ATPase (P-type) (TC 3.A.3) family. Type IB subfamily.

The protein localises to the cell inner membrane. The protein resides in the cytoplasm. It catalyses the reaction Cu(+)(in) + ATP + H2O = Cu(+)(out) + ADP + phosphate + H(+). Involved in Cu(+) export. Functionally, probably also encodes a cytoplasmic copper chaperone CopA(Z) that is produced by programmed ribosomal frameshifting. This is Copper-exporting P-type ATPase (copA) from Escherichia coli O157:H7.